The chain runs to 568 residues: Potassium-transporting ATPase potassium-binding subunit (568 aa).

11 helical membrane passes run 6 to 26 (ILQILAFTAIIWALAKPIGGF), 64 to 84 (TGYAGSLLAFSLVSLLFTYLI), 135 to 155 (IALATHNFFSAAAGIAVAIAF), 179 to 199 (LYILLPMSLLAALFFCSQGVI), 254 to 274 (LANLAQMVLIFLIPAGLTYTF), 285 to 305 (WALLAAMTVLFLAGVCVVYPA), 382 to 402 (GLYGMLLFAILAVFIAGLMVG), 419 to 439 (MVMLSVLVLALCILGFSAAGI), 459 to 481 (VLYGYTSAAGNNGSAFAGLSANT), 488 to 508 (LGIAMLCGRFLMLIPLLAAAG), and 529 to 549 (LFVTLLVGVVVIVGALTFFPA).

This sequence belongs to the KdpA family. As to quaternary structure, the system is composed of three essential subunits: KdpA, KdpB and KdpC.

It is found in the cell inner membrane. Part of the high-affinity ATP-driven potassium transport (or Kdp) system, which catalyzes the hydrolysis of ATP coupled with the electrogenic transport of potassium into the cytoplasm. This subunit binds the periplasmic potassium ions and delivers the ions to the membrane domain of KdpB through an intramembrane tunnel. This is Potassium-transporting ATPase potassium-binding subunit from Solibacter usitatus (strain Ellin6076).